Here is a 1306-residue protein sequence, read N- to C-terminus: Disease resistance protein Roq1 (1306 aa).

Positions 10-179 (RSYDVFLSFR…QILKDIFDKF (170 aa)) constitute a TIR domain. Residues 19-24 (RGEDTR) and glycine 52 each bind NAD(+). Glutamate 86 is an active-site residue. Residues 198-417 (KKLSSLLRMD…IDRLKDNPEG (220 aa)) form the NB-ARC domain. 18 LRR repeats span residues 200–224 (LSSLLRMDLKGVRLVGIWGMGGVGK), 252–275 (LQHHTLLYLQKTLLSKLLKVEFVD), 417–440 (GEIMATLKISFDGLRDYEKSIFLD), 599–622 (PSKLVYLTMKGSSIIELWNGAKRL), 645–669 (ITNLERLILSSCDALVEVHPSVGFL), 670–693 (KNLILLNMDHCISLERLPAIIQSE), 716–739 (MTHLKKLDLTSTGIRELPASIEHL), 741–763 (SLENLQMHSCNQLVSLPSSIWRF), 784–807 (SNCTRELILKLVSIKELPTSIGNL), 808–831 (TSLNFLEICNCKTISSLSSSIWGL), 832–857 (TSLTTLKLLDCRKLKNLPGIPNAINH), 878–902 (LDLLRIIDMSWCSCISSLPHNIWML), 904–926 (FLRILCISYCSRLEYLPENLGHL), 927–949 (EHLEELLADGTGILRLPSSVARL), 961–983 (FAIGPKVQYSSSMLNLPDDVFGS), 987–1010 (LGSVVKLNLSGNGFCNLPETMNQL), 1013–1036 (LEYLDITFCQRLEALPELPPSIKE), and 1045–1070 (LRIMEDLVIKCKELNLIAVTKIEYQN).

Belongs to the disease resistance TIR-NB-LRR family. Homodimer.

The catalysed reaction is NAD(+) + H2O = ADP-D-ribose + nicotinamide + H(+). The enzyme catalyses NAD(+) = 2'cADPR + nicotinamide + H(+). Disease resistance (R) protein that specifically recognizes the Xanthomonas and Pseudomonas effector proteins XopQ and HopQ1, and triggers cell death. An NAD(+) hydrolase (NADase): in response to activation, catalyzes cleavage of NAD(+) into ADP-D-ribose (ADPR) and nicotinamide; NAD(+) cleavage triggers a defense system that promotes cell death. Makes small amounts of 2' cyclic ADPR (2'cADPR). This is Disease resistance protein Roq1 from Nicotiana benthamiana.